A 202-amino-acid polypeptide reads, in one-letter code: Transmembrane protein 223 (202 aa).

At methionine 1–arginine 43 the chain is on the mitochondrial matrix side. Residues phenylalanine 44–isoleucine 64 form a helical membrane-spanning segment. The Mitochondrial intermembrane portion of the chain corresponds to alanine 65 to glycine 97. Residues leucine 98–leucine 118 form a helical membrane-spanning segment. Topologically, residues arginine 119–leucine 202 are mitochondrial matrix.

It belongs to the TMEM223 family. In terms of assembly, associates with the mitochondrial ribosome.

It localises to the mitochondrion inner membrane. Its function is as follows. Mitochondrial ribosome-associated protein involved in the first steps of cytochrome c oxidase complex (complex IV) biogenesis. Stimulates the translation of MT-CO1 mRNA and is a constituent of early MT-CO1 assembly intermediates. This chain is Transmembrane protein 223, found in Bos taurus (Bovine).